Consider the following 354-residue polypeptide: MNTRRELPDSPYLAAARGRKPARVPVWFMRQAGRSLPEYRALRARNTMMQACFDADLITEITLQPVRRHGVDAAILFSDIVVPLRASGIALDIVPDVGPVIDHPVRTAADVAAIRPLERQTVEPVEQAVRMLTAALGDVPLIGFAGAPFTLASYLVEGGPSKHHEHTKAMMLGAPDTWHALMSALTDVTIAFLQAQVDAGVDAIQVFDSWAGTLSLADYRAYVLPHSARVFQALAPAGVPMTHFGVGTAELLGAMSEAIATSGAPGVVGVDWRTSLTDAAGRVERGSALQGNLDPVVLLAGWPVVERAVRAVVEDGRRAVDAGAAGHVFNLGHGVLPATDPEIVTATVELVHSL.

Substrate is bound by residues 30–34, aspartate 79, tyrosine 154, serine 209, and histidine 333; that span reads RQAGR.

This sequence belongs to the uroporphyrinogen decarboxylase family. Homodimer.

Its subcellular location is the cytoplasm. The enzyme catalyses uroporphyrinogen III + 4 H(+) = coproporphyrinogen III + 4 CO2. It participates in porphyrin-containing compound metabolism; protoporphyrin-IX biosynthesis; coproporphyrinogen-III from 5-aminolevulinate: step 4/4. Its function is as follows. Catalyzes the decarboxylation of four acetate groups of uroporphyrinogen-III to yield coproporphyrinogen-III. This is Uroporphyrinogen decarboxylase from Mycobacterium sp. (strain JLS).